Consider the following 1764-residue polypeptide: Cilia- and flagella-associated protein 44 (1764 aa).

WD repeat units lie at residues 115 to 157 (GTER…IVLR), 160 to 199 (AFSQ…TGLK), 208 to 248 (GNVE…VVLT), 255 to 294 (CHDG…DAEP), 361 to 400 (HPAG…VLAE), 454 to 493 (AHKG…QPGT), and 495 to 534 (VPGM…GVLL). Residues 570–654 (QLVVPKPKRP…GGPSSTTGEL (85 aa)) are disordered. The segment covering 575–584 (KPKRPKKKKG) has biased composition (basic residues). 2 stretches are compositionally biased toward basic and acidic residues: residues 585–596 (KNDGEEGDKEGG) and 604–628 (GEDK…GRAA). Acidic residues predominate over residues 629-641 (EEEEEEEADDEAD). WD repeat units lie at residues 649–692 (STTG…PLAA), 707–752 (AHAG…LHDM), and 753–791 (QSGR…ELAP). A coiled-coil region spans residues 821–850 (YTLEEEKQQAERDQQVREAEEKKLSVRQRL). Disordered stretches follow at residues 972-1003 (AAAG…GDAA) and 1426-1468 (KKKA…CPPG). Residues 1434-1462 (GEDDYDSEEDEEDEDMGDDEVDDDDDGGE) are compositionally biased toward acidic residues. Coiled coils occupy residues 1479–1517 (DLRE…LVEQ), 1567–1674 (LVFS…DAKI), and 1729–1758 (EERD…LRRK).

The protein belongs to the CFAP44 family.

Its subcellular location is the cell projection. It localises to the cilium. The protein resides in the flagellum. The protein localises to the cytoplasm. It is found in the cytoskeleton. Its subcellular location is the flagellum axoneme. Its function is as follows. Flagellar protein involved in sperm flagellum axoneme organization and function. The polypeptide is Cilia- and flagella-associated protein 44 (Chlamydomonas reinhardtii (Chlamydomonas smithii)).